A 146-amino-acid chain; its full sequence is Hydroxyproline-rich systemin (146 aa).

An N-terminal signal peptide occupies residues 1–24; sequence MISFFRAFFLIIIISFLIFVGAQA. The propeptide occupies 25 to 48; it reads RTLLGNYHDDEMLIELKLESGNYG. A disordered region spans residues 47-128; the sequence is YGRTPYKTPP…PPPPKPQDEQ (82 aa). Pro-51, Pro-55, Pro-56, Pro-57, Pro-58, and Pro-63 each carry 4-hydroxyproline. Residues Pro-51, Pro-55, Pro-56, Pro-57, Pro-58, and Pro-63 are each glycosylated (O-linked (Ara...) hydroxyproline). Positions 67 to 70 are excised as a propeptide; sequence EIVN. 3 positions are modified to 4-hydroxyproline: Pro-79, Pro-80, and Pro-82. O-linked (Ara...) hydroxyproline glycosylation is found at Pro-79, Pro-80, and Pro-82. A propeptide spanning residues 86 to 110 is cleaved from the precursor; sequence PIIGQLTTITTTPHHDDTVAAPPVG. Residues Pro-119, Pro-120, Pro-121, and Pro-122 each carry the 4-hydroxyproline modification. Pro-119, Pro-120, Pro-121, and Pro-122 each carry an O-linked (Ara...) hydroxyproline glycan. The propeptide occupies 131 to 146; the sequence is IIITSSSSTLPLQASY.

In terms of processing, O-glycosylated; contains pentose side chains. In terms of tissue distribution, leaves.

It is found in the secreted. Activates a lipid-based signal transduction pathway in which linolenic acid is converted to jasmonic acid, a potent activator of defense gene transcription. Induces synthesis of proteinase inhibitors I and II in leaves when supplied through cut stems. In Solanum lycopersicum (Tomato), this protein is Hydroxyproline-rich systemin.